Reading from the N-terminus, the 298-residue chain is Probable GTP 3',8-cyclase (298 aa).

Positions Arg-4–Asp-227 constitute a Radical SAM core domain. Residue Arg-13 participates in GTP binding. The [4Fe-4S] cluster site is built by Cys-20 and Cys-24. An S-adenosyl-L-methionine-binding site is contributed by Tyr-26. [4Fe-4S] cluster is bound at residue Cys-27. A GTP-binding site is contributed by Lys-61. Residue Gly-65 coordinates S-adenosyl-L-methionine. Thr-91 serves as a coordination point for GTP. Ser-115 lines the S-adenosyl-L-methionine pocket. Lys-152 serves as a coordination point for GTP. [4Fe-4S] cluster-binding residues include Cys-243 and Cys-246. Arg-248–Arg-250 provides a ligand contact to GTP. Cys-260 contributes to the [4Fe-4S] cluster binding site.

It belongs to the radical SAM superfamily. MoaA family. It depends on [4Fe-4S] cluster as a cofactor.

It catalyses the reaction GTP + AH2 + S-adenosyl-L-methionine = (8S)-3',8-cyclo-7,8-dihydroguanosine 5'-triphosphate + 5'-deoxyadenosine + L-methionine + A + H(+). The protein operates within cofactor biosynthesis; molybdopterin biosynthesis. Catalyzes the cyclization of GTP to (8S)-3',8-cyclo-7,8-dihydroguanosine 5'-triphosphate. The protein is Probable GTP 3',8-cyclase of Methanococcus maripaludis (strain C6 / ATCC BAA-1332).